The primary structure comprises 429 residues: Polypyrimidine tract-binding protein homolog 2 (429 aa).

An N-acetylserine modification is found at Ser-2. 3 RRM domains span residues 18–96 (KVLH…YSNR), 110–197 (GNVL…YSAH), and 243–323 (SNVL…YSRH). Residues 331-429 (NNDRSRDYTM…QHYGGPGPMH (99 aa)) form a disordered region. Low complexity predominate over residues 367 to 381 (GGSHHQQQQQPQGGW). Gly residues predominate over residues 382–397 (VQPGGQGSMGMGGGGH).

It localises to the nucleus. Plays a role in pre-mRNA splicing. Binds to the polypyrimidine tract of introns. May promote the binding of U2 snRNP to pre-mRNA. The sequence is that of Polypyrimidine tract-binding protein homolog 2 from Arabidopsis thaliana (Mouse-ear cress).